The chain runs to 203 residues: High frequency lysogenization protein HflD homolog (203 aa).

It belongs to the HflD family.

The protein localises to the cytoplasm. Its subcellular location is the cell inner membrane. This Aeromonas salmonicida (strain A449) protein is High frequency lysogenization protein HflD homolog.